A 531-amino-acid polypeptide reads, in one-letter code: CTP synthase (531 aa).

The amidoligase domain stretch occupies residues 1–264; that stretch reads MPKFVVVTGG…GDFLVERLRL (264 aa). Position 13 (serine 13) interacts with CTP. A UTP-binding site is contributed by serine 13. 14 to 19 contacts ATP; sequence GLGKGV. Residue tyrosine 54 participates in L-glutamine binding. Residue aspartate 71 coordinates ATP. Residues aspartate 71 and glutamate 139 each coordinate Mg(2+). Residues 146-148, 185-190, and lysine 221 contribute to the CTP site; these read DYE and KTKPLQ. Residues 185 to 190 and lysine 221 each bind UTP; that span reads KTKPLQ. The region spanning 293 to 531 is the Glutamine amidotransferase type-1 domain; the sequence is CGKYVELPDA…LSAAVEQSRR (239 aa). L-glutamine is bound at residue glycine 351. Cysteine 378 acts as the Nucleophile; for glutamine hydrolysis in catalysis. L-glutamine-binding positions include 379-382, glutamate 402, and arginine 459; that span reads FGMQ. Catalysis depends on residues histidine 504 and glutamate 506.

The protein belongs to the CTP synthase family. In terms of assembly, homotetramer.

It catalyses the reaction UTP + L-glutamine + ATP + H2O = CTP + L-glutamate + ADP + phosphate + 2 H(+). The enzyme catalyses L-glutamine + H2O = L-glutamate + NH4(+). The catalysed reaction is UTP + NH4(+) + ATP = CTP + ADP + phosphate + 2 H(+). It participates in pyrimidine metabolism; CTP biosynthesis via de novo pathway; CTP from UDP: step 2/2. Allosterically activated by GTP, when glutamine is the substrate; GTP has no effect on the reaction when ammonia is the substrate. The allosteric effector GTP functions by stabilizing the protein conformation that binds the tetrahedral intermediate(s) formed during glutamine hydrolysis. Inhibited by the product CTP, via allosteric rather than competitive inhibition. Functionally, catalyzes the ATP-dependent amination of UTP to CTP with either L-glutamine or ammonia as the source of nitrogen. Regulates intracellular CTP levels through interactions with the four ribonucleotide triphosphates. This Pyrobaculum calidifontis (strain DSM 21063 / JCM 11548 / VA1) protein is CTP synthase.